The chain runs to 209 residues: Ion-translocating oxidoreductase complex subunit G (209 aa).

The helical transmembrane segment at 9–29 (ATTLALFAASTTAVTAVVNML) threads the bilayer. Threonine 175 carries the post-translational modification FMN phosphoryl threonine.

The protein belongs to the RnfG family. The complex is composed of six subunits: RnfA, RnfB, RnfC, RnfD, RnfE and RnfG. It depends on FMN as a cofactor.

It is found in the cell inner membrane. Its function is as follows. Part of a membrane-bound complex that couples electron transfer with translocation of ions across the membrane. The sequence is that of Ion-translocating oxidoreductase complex subunit G from Pectobacterium atrosepticum (strain SCRI 1043 / ATCC BAA-672) (Erwinia carotovora subsp. atroseptica).